A 166-amino-acid polypeptide reads, in one-letter code: Lipoprotein signal peptidase (166 aa).

3 consecutive transmembrane segments (helical) span residues 12–32 (WLWL…LILQ), 70–90 (WFFA…MYRS), and 102–122 (ALII…GFVV). Active-site residues include D123 and D141. A helical membrane pass occupies residues 137-157 (FNLADTAICIGAALIVLEGFL).

This sequence belongs to the peptidase A8 family.

It localises to the cell inner membrane. The catalysed reaction is Release of signal peptides from bacterial membrane prolipoproteins. Hydrolyzes -Xaa-Yaa-Zaa-|-(S,diacylglyceryl)Cys-, in which Xaa is hydrophobic (preferably Leu), and Yaa (Ala or Ser) and Zaa (Gly or Ala) have small, neutral side chains.. It participates in protein modification; lipoprotein biosynthesis (signal peptide cleavage). This protein specifically catalyzes the removal of signal peptides from prolipoproteins. The sequence is that of Lipoprotein signal peptidase from Salmonella paratyphi A (strain ATCC 9150 / SARB42).